A 208-amino-acid polypeptide reads, in one-letter code: Small ribosomal subunit protein uS4 (208 aa).

The S4 RNA-binding domain occupies Gln-98–Ile-161.

The protein belongs to the universal ribosomal protein uS4 family. As to quaternary structure, part of the 30S ribosomal subunit. Contacts protein S5. The interaction surface between S4 and S5 is involved in control of translational fidelity.

In terms of biological role, one of the primary rRNA binding proteins, it binds directly to 16S rRNA where it nucleates assembly of the body of the 30S subunit. Its function is as follows. With S5 and S12 plays an important role in translational accuracy. The sequence is that of Small ribosomal subunit protein uS4 from Campylobacter concisus (strain 13826).